The chain runs to 629 residues: Ras GTPase-activating protein gap-1 (629 aa).

The Ras-GAP domain occupies 183-398 (DRIRPVLSSL…SVMASFLDNI (216 aa)). The PH domain maps to 411 to 507 (TVFKFGNLQQ…WLNAIERQRN (97 aa)).

Its subcellular location is the cytoplasm. Its function is as follows. GTPase-activating protein, which inhibits the vulval induction by acting as a negative regulator for the member of the Ras family let-60. Probably decreases the signaling activity of Ras by stimulating its intrinsic GTPase activity, thereby lowering the levels of GTP-bound, active Ras. The protein is Ras GTPase-activating protein gap-1 (gap-1) of Caenorhabditis elegans.